A 498-amino-acid polypeptide reads, in one-letter code: Succinate-semialdehyde dehydrogenase [NADP(+)] 1 (498 aa).

247–252 provides a ligand contact to NAD(+); it reads GSTNVG. Residues Glu-269 and Cys-303 contribute to the active site.

Belongs to the aldehyde dehydrogenase family. As to quaternary structure, homotetramer.

It is found in the cytoplasm. It catalyses the reaction succinate semialdehyde + NAD(+) + H2O = succinate + NADH + 2 H(+). The enzyme catalyses succinate semialdehyde + NADP(+) + H2O = succinate + NADPH + 2 H(+). It functions in the pathway amino-acid degradation; 4-aminobutanoate degradation. Its function is as follows. Catalyzes the oxidation of succinate semialdehyde to succinate. Can utilize both NAD(+) or NADP(+) as a coenzyme. Functions in a gamma-aminobutyrate (GABA) degradation pathway that allows growth utilizing GABA as a nitrogen source. Functions in the GABA shunt, which allows to bypass 2 reactions in the TCA cycle by removing alpha-ketoglutarate from the cycle and feeding succinate and NADH back into the cycle. In Schizosaccharomyces pombe (strain 972 / ATCC 24843) (Fission yeast), this protein is Succinate-semialdehyde dehydrogenase [NADP(+)] 1 (ssd1).